Consider the following 647-residue polypeptide: Acetyl-coenzyme A synthetase (647 aa).

Residues 189-192 (RGGK), T307, and N331 contribute to the CoA site. ATP contacts are provided by residues 383-385 (GEP), 407-412 (DTWWQT), D496, and R511. S519 lines the CoA pocket. R522 is an ATP binding site. H535 and V538 together coordinate Mg(2+). R580 contributes to the CoA binding site. An N6-acetyllysine modification is found at K605.

Belongs to the ATP-dependent AMP-binding enzyme family. Mg(2+) serves as cofactor. Acetylated. Deacetylation by the SIR2-homolog deacetylase activates the enzyme.

The enzyme catalyses acetate + ATP + CoA = acetyl-CoA + AMP + diphosphate. Catalyzes the conversion of acetate into acetyl-CoA (AcCoA), an essential intermediate at the junction of anabolic and catabolic pathways. AcsA undergoes a two-step reaction. In the first half reaction, AcsA combines acetate with ATP to form acetyl-adenylate (AcAMP) intermediate. In the second half reaction, it can then transfer the acetyl group from AcAMP to the sulfhydryl group of CoA, forming the product AcCoA. The protein is Acetyl-coenzyme A synthetase of Syntrophus aciditrophicus (strain SB).